The following is a 346-amino-acid chain: Probable WRKY transcription factor 54 (346 aa).

The disordered stretch occupies residues 109–130 (PVSCNGGDSGESKKKRLGVGKG). Over residues 121 to 130 (KKKRLGVGKG) the composition is skewed to basic residues. Residues 146-214 (VEAKSSEDRY…YIGYHTCTAN (69 aa)) constitute a DNA-binding region (WRKY). Residues 267-282 (VKEEQNNNGDQSKDYY) show a composition bias toward basic and acidic residues. A disordered region spans residues 267–286 (VKEEQNNNGDQSKDYYEGSS).

This sequence belongs to the WRKY group III family. As to quaternary structure, interacts with WRKY30. Binds to BZR2/BES1 to cooperatively regulate the expression of target genes. Interacts with ASK7/BIN2. Phosphorylated and destabilized by ASK7/BIN2. In terms of tissue distribution, expressed in leaves.

Its subcellular location is the nucleus. Transcription factor. Interacts specifically with the W box (5'-(T)TGAC[CT]-3'), a frequently occurring elicitor-responsive cis-acting element. Together with WRKY70, negative regulator of developmental senescence, probably via the regulation of several senescence-associated markers genes. Positive regulator of EDS1-dependent defense against E.amylovora. In collaboration with WRKY70, prevents stomatal closure and, consequently, osmotic stress tolerance. Together with WRKY46 and WRKY70, promotes brassinosteroid (BR)-regulated plant growth but prevent drought response by modulating gene expression. Negative regulator of SA biosynthesis. Prevents defense response to the necrotrophic pathogens P.carotovorum and B.cinerea, but promotes defense against biotrophic/hemibiotrophic pathogens P.syringae pv. tomato (Pst) DC3000, probably by regulating negatively the jasmonic acid (JA)/ethylene (ET) and positively the salicylic acid (SA) signaling pathways. The sequence is that of Probable WRKY transcription factor 54 from Arabidopsis thaliana (Mouse-ear cress).